We begin with the raw amino-acid sequence, 289 residues long: 4-hydroxy-tetrahydrodipicolinate synthase (289 aa).

Residue Thr-43 participates in pyruvate binding. Tyr-131 (proton donor/acceptor) is an active-site residue. Lys-160 (schiff-base intermediate with substrate) is an active-site residue. Residue Val-200 coordinates pyruvate.

The protein belongs to the DapA family. Homotetramer; dimer of dimers.

It is found in the cytoplasm. The catalysed reaction is L-aspartate 4-semialdehyde + pyruvate = (2S,4S)-4-hydroxy-2,3,4,5-tetrahydrodipicolinate + H2O + H(+). The protein operates within amino-acid biosynthesis; L-lysine biosynthesis via DAP pathway; (S)-tetrahydrodipicolinate from L-aspartate: step 3/4. Its function is as follows. Catalyzes the condensation of (S)-aspartate-beta-semialdehyde [(S)-ASA] and pyruvate to 4-hydroxy-tetrahydrodipicolinate (HTPA). The protein is 4-hydroxy-tetrahydrodipicolinate synthase of Methanococcus maripaludis (strain C7 / ATCC BAA-1331).